The chain runs to 336 residues: Probable aquaglyceroporin-2 (336 aa).

The segment at M1–P46 is disordered. Residues M1–E64 lie on the Cytoplasmic side of the membrane. The span at S9–S19 shows a compositional bias: low complexity. Residues F65 to S85 form a helical membrane-spanning segment. Over R86–S94 the chain is Extracellular. A helical transmembrane segment spans residues I95–G115. The Cytoplasmic segment spans residues H116–K135. The NPA 1 signature appears at N118–A120. The helical transmembrane segment at F136–G156 threads the bilayer. The Extracellular portion of the chain corresponds to N157–T195. Residue N178 is glycosylated (N-linked (GlcNAc...) asparagine). Residues G196–A216 form a helical membrane-spanning segment. The Cytoplasmic segment spans residues D217–A223. A helical membrane pass occupies residues G224 to W244. Topologically, residues E245 to W280 are extracellular. Residues N251 to A253 carry the NPA 2 motif. The helical transmembrane segment at I281 to I301 threads the bilayer. The Cytoplasmic portion of the chain corresponds to Y302 to V336.

Belongs to the MIP/aquaporin (TC 1.A.8) family.

It localises to the membrane. The enzyme catalyses H2O(in) = H2O(out). The catalysed reaction is glycerol(in) = glycerol(out). Its function is as follows. Probable water/glycerol channel that may have redundant functions with FgAQP4. The chain is Probable aquaglyceroporin-2 from Gibberella zeae (strain ATCC MYA-4620 / CBS 123657 / FGSC 9075 / NRRL 31084 / PH-1) (Wheat head blight fungus).